The sequence spans 406 residues: MGPHTQLLILLLLSWLGPLQGQQHHLVEYMERRLAALEERLAQCQDQSSRHAAELRDFKNKMLPLLEVAEKEREALRTEADTISGRVDRLEREVDYLETQNPALPCVEVDEKVTGGPGTKGKGRRNEKYDMITDCGYTISQVRSMKILKRFGGPAGLWTKDPLGPAEKIYVLDGTQNDTAFVFPRLRDFTLAMAARKASRVRVPFPWVGTGQLVYGGFLYYARRPPGGPGGGGELQNTLQLIKFHLANRTVVDSSVFPAEGLIPPYGLTADTYIDLAADEEGLWAVYATREDDRHLCLAKLDPQTLDTEQQWDTPCPRENAEAAFVICGTLYVVYNTRPASRARIQCSFDASGTLTPERAALPYFPRRYGAHASLRYNPRERQLYAWDDGYQIVYKLEMRKKEEEV.

The signal sequence occupies residues 1-21 (MGPHTQLLILLLLSWLGPLQG). Residues 22–101 (QQHHLVEYME…REVDYLETQN (80 aa)) are a coiled coil. The region spanning 134–401 (DCGYTISQVR…QIVYKLEMRK (268 aa)) is the Olfactomedin-like domain. C135 and C328 are joined by a disulfide. The N-linked (GlcNAc...) asparagine glycan is linked to N248.

This sequence belongs to the OLFML3 family.

The protein localises to the secreted. In terms of biological role, secreted scaffold protein that plays an essential role in dorsoventral patterning during early development. Stabilizes axial formation by restricting chordin (CHRD) activity on the dorsal side. Acts by facilitating the association between the tolloid proteases and their substrate chordin (CHRD), leading to enhance chordin (CHRD) degradation. May have matrix-related function involved in placental and embryonic development, or play a similar role in other physiological processes. The protein is Olfactomedin-like protein 3 (OLFML3) of Bos taurus (Bovine).